The primary structure comprises 430 residues: uncharacterized protein (430 aa).

Helical transmembrane passes span 18–38, 49–69, 80–100, 109–129, 145–165, 175–195, 235–255, 256–276, 285–305, 307–327, 353–373, and 377–397; these read LFLL…NTFV, FIDL…TFYL, VFIL…VLLA, VLIG…FNVL, FMGI…GFVI, TVIF…SFFL, IFVF…LALG, TFGL…SRLI, ILLG…HMSF, TLLT…VPYV, MFLN…VALL, and VGIP…YYFV. Residues 407–430 are disordered; that stretch reads GENETMEEDGQKRVTEPTLLKGER. A compositionally biased stretch (basic and acidic residues) spans 415 to 430; the sequence is DGQKRVTEPTLLKGER.

The protein resides in the cell membrane. This is an uncharacterized protein from Bacillus subtilis (strain 168).